The sequence spans 146 residues: Large ribosomal subunit protein uL15 (146 aa).

The tract at residues 1–51 is disordered; the sequence is MQLNTLKPAEGSKKNRRRVGRGIGSGLGKTAGRGHKGQKSRSGGFHKVGFE. Positions 21–31 are enriched in gly residues; it reads RGIGSGLGKTA.

Belongs to the universal ribosomal protein uL15 family. As to quaternary structure, part of the 50S ribosomal subunit.

Functionally, binds to the 23S rRNA. The sequence is that of Large ribosomal subunit protein uL15 from Polynucleobacter asymbioticus (strain DSM 18221 / CIP 109841 / QLW-P1DMWA-1) (Polynucleobacter necessarius subsp. asymbioticus).